A 459-amino-acid chain; its full sequence is Cysteine--tRNA ligase (459 aa).

Cys31 is a Zn(2+) binding site. The 'HIGH' region motif lies at 33–43 (PTVYDNPHIGN). Zn(2+)-binding residues include Cys216, His241, and Glu245. A 'KMSKS' region motif is present at residues 274–278 (KMSKS). Residue Lys277 coordinates ATP.

The protein belongs to the class-I aminoacyl-tRNA synthetase family. In terms of assembly, monomer. Requires Zn(2+) as cofactor.

It is found in the cytoplasm. It catalyses the reaction tRNA(Cys) + L-cysteine + ATP = L-cysteinyl-tRNA(Cys) + AMP + diphosphate. The sequence is that of Cysteine--tRNA ligase from Rickettsia felis (strain ATCC VR-1525 / URRWXCal2) (Rickettsia azadi).